Reading from the N-terminus, the 400-residue chain is Multidrug resistance protein 2 (400 aa).

A run of 11 helical transmembrane segments spans residues 11–31 (IFII…LIIP), 46–66 (TMGY…PFAG), 78–98 (IILG…GTHV), 106–126 (ILGG…VADI), 142–162 (AIST…GFGI), 164–184 (MPFF…VFIL), 213–233 (IHPV…GLSA), 253–273 (IAAI…LLFG), 297–317 (FVST…FIFL), 346–366 (STYT…LFDL), and 368–388 (IHYP…LTMV).

The protein belongs to the major facilitator superfamily. TCR/Tet family.

The protein resides in the cell membrane. Functionally, energy-dependent efflux pump responsible for decreased drug accumulation in multi-drug-resistant cells. Probably uses a transmembrane proton gradient as the energy source. Causes the efflux of a variety of toxic substances, including such structurally diverse compounds as ethidium bromide, rhodamine and acridine dyes, tetraphenylphosphonium, puromycin, chloramphenicol, doxorubicin, and fluoroquinolone antibiotics. The protein is Multidrug resistance protein 2 (blt) of Bacillus subtilis (strain 168).